We begin with the raw amino-acid sequence, 677 residues long: MTDNFADLRRQWDDLAEQVRHHRDAYYNHTPEISDAEFDQLFRQLQQLEQEHPELAVPESPTLRVGAPVEQSSFDNVEHLERMLSLDNVFDAAELDDWLQRTPSATYLTELKIDGLSIDLVYRSGRLERAATRGDGRVGEDVTANAKVIEDIPHRLQHSDAYPVPELVEIRGEVFIAVEDFALVNEQRQKEGGKPFANPRNAAAGSLRQKDTEAVRKRRLKMICHGIGASEGFEADTQFDAYKALEAWGLPVSPYTKRVHSAQEVQERVTYWAQHRHDATHEMDGLVIKIDSFAEQRALGSTARAPRWAIAYKYPPEEVTTKLLDIQVGVGRTGRVTPFAVMDPVFVAGSTVEMATLHNQTEVKRKGVLIGDTVVIRKAGEVIPEVLGPVVEKRDGSEREFIFPTLCPACGTRLAPQKEDDADWRCPNSQSCPAQLSSRLTYLAGRGAFDIEALGEKGAEDLIASGVLIDEAQLFNLTEDDLKRTKVYTTKAGALNATGEKLLANLESAKHTDLWRVLVALSIRHVGPTAARALAVRYRSLEALRAADVEDIANTEGVGAIIAQSFAQWFDVPWHRNIVEVWADAGVTMADSEADIPDQVLEGLTIVVTGSLVDFSRDSAKEAIVSRGGKASGSVSKKTSYVVVGENAGSKETKARDLGLRILNEDEFKQLLANGTV.

NAD(+) is bound by residues 35–39 (DAEFD), 85–86 (SL), and glutamate 110. Catalysis depends on lysine 112, which acts as the N6-AMP-lysine intermediate. The NAD(+) site is built by arginine 133 and glutamate 173. Positions 189 to 210 (QKEGGKPFANPRNAAAGSLRQK) are disordered. The NAD(+) site is built by lysine 289 and lysine 313. Residues cysteine 407, cysteine 410, cysteine 426, and cysteine 432 each contribute to the Zn(2+) site. The BRCT domain maps to 596–677 (IPDQVLEGLT…FKQLLANGTV (82 aa)).

The protein belongs to the NAD-dependent DNA ligase family. LigA subfamily. The cofactor is Mg(2+). Mn(2+) is required as a cofactor.

The enzyme catalyses NAD(+) + (deoxyribonucleotide)n-3'-hydroxyl + 5'-phospho-(deoxyribonucleotide)m = (deoxyribonucleotide)n+m + AMP + beta-nicotinamide D-nucleotide.. Functionally, DNA ligase that catalyzes the formation of phosphodiester linkages between 5'-phosphoryl and 3'-hydroxyl groups in double-stranded DNA using NAD as a coenzyme and as the energy source for the reaction. It is essential for DNA replication and repair of damaged DNA. The sequence is that of DNA ligase from Corynebacterium diphtheriae (strain ATCC 700971 / NCTC 13129 / Biotype gravis).